The following is a 305-amino-acid chain: Serine/threonine-protein phosphatase PP-X isozyme 2 (305 aa).

Mn(2+) is bound by residues Asp-51, His-53, Asp-79, and Asn-111. His-112 functions as the Proton donor in the catalytic mechanism. Mn(2+) is bound by residues His-161 and His-236.

It belongs to the PPP phosphatase family. PP-4 (PP-X) subfamily. Mn(2+) is required as a cofactor. Ubiquitous, mostly expressed in root mersitems, flowers, and vascular tissues.

It localises to the plastid stroma. It catalyses the reaction O-phospho-L-seryl-[protein] + H2O = L-seryl-[protein] + phosphate. The catalysed reaction is O-phospho-L-threonyl-[protein] + H2O = L-threonyl-[protein] + phosphate. The protein is Serine/threonine-protein phosphatase PP-X isozyme 2 (PPX2) of Arabidopsis thaliana (Mouse-ear cress).